A 491-amino-acid polypeptide reads, in one-letter code: UDP-N-acetylmuramoyl-L-alanyl-D-glutamate--2,6-diaminopimelate ligase (491 aa).

Ser-30 is a binding site for UDP-N-acetyl-alpha-D-muramoyl-L-alanyl-D-glutamate. Gly-108 to Thr-114 lines the ATP pocket. UDP-N-acetyl-alpha-D-muramoyl-L-alanyl-D-glutamate contacts are provided by residues Asn-149, Thr-150 to Thr-151, Ser-177, and Arg-185. Lys-217 is modified (N6-carboxylysine). Residues Arg-383, Asp-407 to Arg-410, Gly-457, and Glu-461 contribute to the meso-2,6-diaminopimelate site. The short motif at Asp-407 to Arg-410 is the Meso-diaminopimelate recognition motif element.

It belongs to the MurCDEF family. MurE subfamily. Mg(2+) serves as cofactor. Carboxylation is probably crucial for Mg(2+) binding and, consequently, for the gamma-phosphate positioning of ATP.

The protein resides in the cytoplasm. It carries out the reaction UDP-N-acetyl-alpha-D-muramoyl-L-alanyl-D-glutamate + meso-2,6-diaminopimelate + ATP = UDP-N-acetyl-alpha-D-muramoyl-L-alanyl-gamma-D-glutamyl-meso-2,6-diaminopimelate + ADP + phosphate + H(+). The protein operates within cell wall biogenesis; peptidoglycan biosynthesis. Catalyzes the addition of meso-diaminopimelic acid to the nucleotide precursor UDP-N-acetylmuramoyl-L-alanyl-D-glutamate (UMAG) in the biosynthesis of bacterial cell-wall peptidoglycan. This Bacillus cereus (strain ATCC 14579 / DSM 31 / CCUG 7414 / JCM 2152 / NBRC 15305 / NCIMB 9373 / NCTC 2599 / NRRL B-3711) protein is UDP-N-acetylmuramoyl-L-alanyl-D-glutamate--2,6-diaminopimelate ligase.